The primary structure comprises 482 residues: tRNA sulfurtransferase (482 aa).

Residues 61–165 (LTIRDALTRI…DDRLLLIKGR (105 aa)) form the THUMP domain. ATP-binding positions include 183-184 (LI), lysine 265, glycine 287, and glutamine 296. Residues cysteine 344 and cysteine 456 are joined by a disulfide bond. Residues 404–482 (CGPNDVILDI…GFNNVKVYRP (79 aa)) enclose the Rhodanese domain. The active-site Cysteine persulfide intermediate is cysteine 456.

Belongs to the ThiI family.

Its subcellular location is the cytoplasm. The catalysed reaction is [ThiI sulfur-carrier protein]-S-sulfanyl-L-cysteine + a uridine in tRNA + 2 reduced [2Fe-2S]-[ferredoxin] + ATP + H(+) = [ThiI sulfur-carrier protein]-L-cysteine + a 4-thiouridine in tRNA + 2 oxidized [2Fe-2S]-[ferredoxin] + AMP + diphosphate. The enzyme catalyses [ThiS sulfur-carrier protein]-C-terminal Gly-Gly-AMP + S-sulfanyl-L-cysteinyl-[cysteine desulfurase] + AH2 = [ThiS sulfur-carrier protein]-C-terminal-Gly-aminoethanethioate + L-cysteinyl-[cysteine desulfurase] + A + AMP + 2 H(+). It functions in the pathway cofactor biosynthesis; thiamine diphosphate biosynthesis. Its function is as follows. Catalyzes the ATP-dependent transfer of a sulfur to tRNA to produce 4-thiouridine in position 8 of tRNAs, which functions as a near-UV photosensor. Also catalyzes the transfer of sulfur to the sulfur carrier protein ThiS, forming ThiS-thiocarboxylate. This is a step in the synthesis of thiazole, in the thiamine biosynthesis pathway. The sulfur is donated as persulfide by IscS. In Shigella dysenteriae serotype 1 (strain Sd197), this protein is tRNA sulfurtransferase.